The following is a 230-amino-acid chain: Orotidine 5'-phosphate decarboxylase (230 aa).

Residues Asp10, Lys31, 58-67 (DLKLHDIPNT), Thr117, Arg179, Gln188, Gly208, and Arg209 contribute to the substrate site. Lys60 functions as the Proton donor in the catalytic mechanism.

Belongs to the OMP decarboxylase family. Type 1 subfamily. Homodimer.

The catalysed reaction is orotidine 5'-phosphate + H(+) = UMP + CO2. It participates in pyrimidine metabolism; UMP biosynthesis via de novo pathway; UMP from orotate: step 2/2. In terms of biological role, catalyzes the decarboxylation of orotidine 5'-monophosphate (OMP) to uridine 5'-monophosphate (UMP). In Staphylococcus epidermidis (strain ATCC 35984 / DSM 28319 / BCRC 17069 / CCUG 31568 / BM 3577 / RP62A), this protein is Orotidine 5'-phosphate decarboxylase.